We begin with the raw amino-acid sequence, 472 residues long: Argininosuccinate lyase (472 aa).

Belongs to the lyase 1 family. Argininosuccinate lyase subfamily.

It is found in the cytoplasm. It catalyses the reaction 2-(N(omega)-L-arginino)succinate = fumarate + L-arginine. It functions in the pathway amino-acid biosynthesis; L-arginine biosynthesis; L-arginine from L-ornithine and carbamoyl phosphate: step 3/3. In Rhodococcus opacus (strain B4), this protein is Argininosuccinate lyase.